The chain runs to 529 residues: MMITSAVVLYLLLLSHQTVSEEQVQQFVIGEKGNNTTLHCLDHPVNASSVLYQWKKDGAVVATQNPPNPSVHLSISENGFLRISGLQLIDEGLYECESQAKGGRSWQTLSKIQLTIAAGPTGVSLDISPATFLNNGTLFVHKGSNVNFSCSSESNPSQNLTWTVDNLASDNPEREFGSKSPLAFSITNIQPLDQGTYTCTSQNTLSRRTANKTQELLVYYAPERHPECSWELGDKPSDVLFICSWFGGYPVPTLTWQEVEGAAEGPTINLTTSQQTEELNVSVNRSILHDGDKVKCTGHHVTGVEKSCSFTLKIPYPTGQPLATALEGTNITISCTETSSLPPAKTVWKKNDDLIENTSKYIVQENRPALTLTIVNVTKADEGVYYCYSENPLGARELEVYLNVKTSAGNGGAIVGIFVSVLVMMIGIVVGVTVYTKRDRICIGLRFSQLDDDRVDVLSLVDSDEEEIFHEAVPRLPPVTNGHATTLVEIHRIPSCDHEDIADSTEQSDQTRANLTEAGPQRAELQPAV.

The signal sequence occupies residues 1–18 (MMITSAVVLYLLLLSHQT). Ig-like C2-type domains follow at residues 19-110 (VSEE…QTLS) and 129-217 (PATF…QELL). The Extracellular portion of the chain corresponds to 21 to 411 (EEQVQQFVIG…LNVKTSAGNG (391 aa)). N34, N35, N46, N135, N147, N159, N211, N269, N280, N284, N330, N357, and N376 each carry an N-linked (GlcNAc...) asparagine glycan. Cysteines 40 and 96 form a disulfide. C150 and C199 are joined by a disulfide. The 87-residue stretch at 317–403 (PTGQPLATAL…GARELEVYLN (87 aa)) folds into the Ig-like C2-type 3 domain. A disulfide bridge links C335 with C387. The helical transmembrane segment at 412-432 (GAIVGIFVSVLVMMIGIVVGV) threads the bilayer. Over 433-529 (TVYTKRDRIC…PQRAELQPAV (97 aa)) the chain is Cytoplasmic.

Its subcellular location is the membrane. This is V-set and immunoglobulin domain-containing protein 10 (vsig10) from Danio rerio (Zebrafish).